The sequence spans 76 residues: uncharacterized protein (76 aa).

An N-terminal signal peptide occupies residues 1-15; sequence MYLPLLLFCVISCYG.

This is an uncharacterized protein from Magallana gigas (Pacific oyster).